A 77-amino-acid polypeptide reads, in one-letter code: MADKSDSEAVALLMEAIVTTPDTNSEPQYQSQHRDLQECYYSDSDNEKATEFLRRIGKHQHKKKNSVKKRVTFLVYF.

The Di-leucine internalization motif signature appears at 12-13 (LL).

Belongs to the alphaherpesvirinae envelope protein US9 family.

This chain is Envelope protein US9 homolog, found in Chlorocebus aethiops (Green monkey).